The primary structure comprises 165 residues: Nicotine 6-hydroxylase small subunit (165 aa).

The region spanning 10-86 (VEIDVEVNGR…GRSIRTVEDL (77 aa)) is the 2Fe-2S ferredoxin-type domain. Residues C48, C53, C56, and C68 each contribute to the [2Fe-2S] cluster site.

In terms of assembly, heterotrimer composed of a large subunit (NdhL), a medium subunit (NdhM) and a small subunit (NdhS). It depends on [2Fe-2S] cluster as a cofactor.

The protein localises to the cytoplasm. It catalyses the reaction (R)-nicotine + A + H2O = (R)-6-hydroxynicotine + AH2. The enzyme catalyses (S)-nicotine + A + H2O = (S)-6-hydroxynicotine + AH2. It participates in alkaloid degradation; nicotine degradation; 6-hydroxypseudooxynicotine from nicotine (R-isomer route): step 1/2. The protein operates within alkaloid degradation; nicotine degradation; 6-hydroxypseudooxynicotine from nicotine (S-isomer route): step 1/2. Its activity is regulated as follows. Nicotine dehydrogenase activity is inhibited by tungsten. Functionally, component of the nicotine 6-hydroxylase, which is involved in the degradation of nicotine. Catalyzes the hydroxylation of the pyridine ring at C6 to form 6-hydroxynicotine. Can use both L-nicotine and D-nicotine. The polypeptide is Nicotine 6-hydroxylase small subunit (Paenarthrobacter nicotinovorans (Arthrobacter nicotinovorans)).